Reading from the N-terminus, the 562-residue chain is tRNA (guanine(37)-N(1))-methyltransferase (562 aa).

The N-terminal 41 residues, 1–41, are a transit peptide targeting the mitochondrion; the sequence is MLFRRFLNLTTKTPHLQTFRARHYFRNMSCPELIPPPTVRG. S-adenosyl-L-methionine contacts are provided by residues His243, 281-282, and Asn340; that span reads DL. Residues 523-534 show a composition bias toward basic and acidic residues; the sequence is AHIVAKKPEKKP. Residues 523–562 form a disordered region; sequence AHIVAKKPEKKPLPAKPASKKNKNQANTKQVEAGLDKMQM.

It belongs to the class I-like SAM-binding methyltransferase superfamily. TRM5/TYW2 family. As to quaternary structure, monomer.

It is found in the mitochondrion matrix. The protein resides in the nucleus. The protein localises to the cytoplasm. It catalyses the reaction guanosine(37) in tRNA + S-adenosyl-L-methionine = N(1)-methylguanosine(37) in tRNA + S-adenosyl-L-homocysteine + H(+). In terms of biological role, specifically methylates the N1 position of guanosine-37 in various cytoplasmic and mitochondrial tRNAs. Methylation is not dependent on the nature of the nucleoside 5' of the target nucleoside. This is the first step in the biosynthesis of wybutosine (yW), a modified base adjacent to the anticodon of tRNAs and required for accurate decoding. In Aedes aegypti (Yellowfever mosquito), this protein is tRNA (guanine(37)-N(1))-methyltransferase.